Here is an 890-residue protein sequence, read N- to C-terminus: Wolframin (890 aa).

Met1 is subject to N-acetylmethionine. The span at 1 to 20 shows a compositional bias: pro residues; the sequence is MNSGTPPPSPSGPPPPPAPQ. The tract at residues 1–83 is disordered; it reads MNSGTPPPSP…ETDRAGPMKA (83 aa). The interval 1-323 is interaction with ATP6V1A; sequence MNSGTPPPSP…MHWLSTIVPT (323 aa). Thr30 is modified (phosphothreonine). Residue Ser32 is modified to Phosphoserine. Residues 50–67 are compositionally biased toward low complexity; the sequence is PSAGRSAGEAAAPEPRAP. The segment covering 71-83 has biased composition (basic and acidic residues); that stretch reads SREETDRAGPMKA. The residue at position 158 (Ser158) is a Phosphoserine. Residues 208 to 227 form a disordered region; the sequence is VNEQDGGAQPGPVPKSLQKQ. The next 10 membrane-spanning stretches (helical) occupy residues 314-334, 340-360, 402-422, 427-447, 465-485, 496-516, 529-549, 563-583, 589-609, and 632-652; these read MHWL…FFFI, IDFF…VSMV, NHLE…FSFP, DCIP…TSYM, VAAG…FLKV, GHFI…LFYL, TYCY…SVVI, IGYF…ALMG, RWFL…CGVP, and SSMV…CWFY. At 653 to 869 the chain is on the lumenal side; that stretch reads VYRSEGMKVY…HVKIEQDWRS (217 aa). 2 N-linked (GlcNAc...) asparagine glycosylation sites follow: Asn663 and Asn748. A helical transmembrane segment spans residues 870 to 890; that stretch reads TVHGALKFAFDFFFFPFLSAA.

Interacts with ATP6V1A. Highly expressed in the developing lens.

The protein resides in the endoplasmic reticulum membrane. It localises to the cytoplasmic vesicle. Its subcellular location is the secretory vesicle. In terms of biological role, participates in the regulation of cellular Ca(2+) homeostasis, at least partly, by modulating the filling state of the endoplasmic reticulum Ca(2+) store. Negatively regulates the ER stress response and positively regulates the stability of V-ATPase subunits ATP6V1A and ATP1B1 by preventing their degradation through an unknown proteasome-independent mechanism. The polypeptide is Wolframin (Wfs1) (Mus musculus (Mouse)).